Reading from the N-terminus, the 432-residue chain is MHAFTTQNPNRMAPTVILEPAGGCLCDQPVHIAVRGLAPEQPVTLRSVLRDEKGALFRAHARYRADSHGELDLARTPALGGSFSGLEPMGLLWAMEPDRPFWRLIKRDVQTPFVVELEVLDGHEPDGGQRLARAVHERHFMAPGVRRVPVREGRVRATLFLPPGTGPFPGIIDLFGIGSGLLEYRASLLAGKGFAVMALAYNNYEDLPKDMDIIHLEYFEEAVTYLLSHPQVTGSGVGVLGISKGGELGFAMASFLKNITAAVIINGSISNIGGNLQYKDETVPSVGINTKRVKRTKDGLKDIVDLLNNPLEGPDQKSLIPVERSDTAFLFLVGQDDHNWKSEFYAREASKRLQAHGKEKPQIICYPETGHHIEPPYFPLCKASLNSLVGGPVIWGGEPRAHAMAQVDAWQQLQTFFHNHLDGKKKTIPAKL.

Catalysis depends on charge relay system residues Ser-243, Asp-337, and His-371. The short motif at 430-432 (AKL) is the Microbody targeting signal element.

It belongs to the C/M/P thioester hydrolase family. As to expression, widely expressed. Highly expressed in the kidney, expressed at low level in the liver. Isoform 2 is expressed in the kidney, but not in the liver. Isoform 1 is liver-specific. Highly expressed in kidney (at protein level).

Its subcellular location is the peroxisome. The enzyme catalyses hexadecanoyl-CoA + H2O = hexadecanoate + CoA + H(+). It catalyses the reaction decanoyl-CoA + H2O = decanoate + CoA + H(+). The catalysed reaction is dodecanoyl-CoA + H2O = dodecanoate + CoA + H(+). It carries out the reaction tetradecanoyl-CoA + H2O = tetradecanoate + CoA + H(+). The enzyme catalyses octadecanoyl-CoA + H2O = octadecanoate + CoA + H(+). It catalyses the reaction eicosanoyl-CoA + H2O = eicosanoate + CoA + H(+). The catalysed reaction is (9Z)-octadecenoyl-CoA + H2O = (9Z)-octadecenoate + CoA + H(+). It carries out the reaction (9Z,12Z)-octadecadienoyl-CoA + H2O = (9Z,12Z)-octadecadienoate + CoA + H(+). The enzyme catalyses (5Z,8Z,11Z,14Z)-eicosatetraenoyl-CoA + H2O = (5Z,8Z,11Z,14Z)-eicosatetraenoate + CoA + H(+). It catalyses the reaction tetracosanoyl-CoA + H2O = tetracosanoate + CoA + H(+). The catalysed reaction is hexacosanoyl-CoA + H2O = hexacosanoate + CoA + H(+). It carries out the reaction docosanoyl-CoA + H2O = docosanoate + CoA + H(+). The enzyme catalyses (9Z)-hexadecenoyl-CoA + H2O = (9Z)-hexadecenoate + CoA + H(+). It participates in lipid metabolism; fatty acid metabolism. Catalyzes the hydrolysis of acyl-CoAs into free fatty acids and coenzyme A (CoASH), regulating their respective intracellular levels. Mainly active on long-chain acyl-CoAs. May have a function in termination of beta-oxidation of fatty acids. This is Acyl-coenzyme A thioesterase 3 (Acot3) from Mus musculus (Mouse).